We begin with the raw amino-acid sequence, 56 residues long: Conotoxin Bu12 (56 aa).

Residues Thr1 to Ala2 form the signal peptide. A propeptide spanning residues Glu3 to Arg25 is cleaved from the precursor. 3 cysteine pairs are disulfide-bonded: Cys26–Cys40, Cys33–Cys44, and Cys39–Cys49.

The protein belongs to the conotoxin O1 superfamily. In terms of tissue distribution, expressed by the venom duct.

The protein localises to the secreted. The sequence is that of Conotoxin Bu12 from Conus bullatus (Bubble cone).